Here is a 602-residue protein sequence, read N- to C-terminus: MNHIRNFSIIAHIDHGKSTLADRLIQRCGGLEERQMEAQVLDSMDIEKERGITIKAQTAALQYKARDGQVYNLNLIDTPGHVDFSYEVSRSLSACEGALLVVDASQGVEAQTVANCYTALDLGVEVLPVLNKMDLPQADPDNAKAEIEDVIGIDATDAIPCSAKTGMGIDEILELIVAKVPAPRGNPDAPLRAMIIDSWFDPYVGVVMLVRVVDGRLLKGERFKMMASGAAYNADNLGVFTPANEPRNALNAGEVGYIIAGIKELKAAKVGDTITLEKKLPNNLGPAEQALPGFKEIQPQVFAGLYPTEASEYDQLRDALEKLQLNDASLHFEPEVSQALGFGFRCGFLGLLHMEIVQERLEREFDQDLITTAPSVVYEVVKGDGEVIMVENPSKMPDQGRIQEIREPIVTVHLYMPQEYVGPVMTLANQKRGVQLNMAYHGRQVMLTYELPLGEIVLDFFDKLKSVSRGYASMDYEFKEYRASDVVKVDILLNGEKVDALSIIVHRSQSAYRGRAVAAKMREIISRQMFDVAIQAAIGANIIARETIKALRKNVLAKCYGGDITRKRKLLEKQKAGKKRMKQIGSVEVPQEAFLAILQVEE.

The tr-type G domain maps to 2–184; it reads NHIRNFSIIA…LIVAKVPAPR (183 aa). Residues 14–19 and 131–134 contribute to the GTP site; these read DHGKST and NKMD.

Belongs to the TRAFAC class translation factor GTPase superfamily. Classic translation factor GTPase family. LepA subfamily.

The protein resides in the cell inner membrane. The enzyme catalyses GTP + H2O = GDP + phosphate + H(+). Required for accurate and efficient protein synthesis under certain stress conditions. May act as a fidelity factor of the translation reaction, by catalyzing a one-codon backward translocation of tRNAs on improperly translocated ribosomes. Back-translocation proceeds from a post-translocation (POST) complex to a pre-translocation (PRE) complex, thus giving elongation factor G a second chance to translocate the tRNAs correctly. Binds to ribosomes in a GTP-dependent manner. In Paracidovorax citrulli (strain AAC00-1) (Acidovorax citrulli), this protein is Elongation factor 4.